The primary structure comprises 196 residues: ATP-dependent Clp protease proteolytic subunit (196 aa).

The active-site Nucleophile is the Ser101. Residue His126 is part of the active site.

Belongs to the peptidase S14 family. Component of the chloroplastic Clp protease core complex.

It is found in the plastid. The protein resides in the chloroplast stroma. The catalysed reaction is Hydrolysis of proteins to small peptides in the presence of ATP and magnesium. alpha-casein is the usual test substrate. In the absence of ATP, only oligopeptides shorter than five residues are hydrolyzed (such as succinyl-Leu-Tyr-|-NHMec, and Leu-Tyr-Leu-|-Tyr-Trp, in which cleavage of the -Tyr-|-Leu- and -Tyr-|-Trp bonds also occurs).. Functionally, cleaves peptides in various proteins in a process that requires ATP hydrolysis. Has a chymotrypsin-like activity. Plays a major role in the degradation of misfolded proteins. The sequence is that of ATP-dependent Clp protease proteolytic subunit from Vitis vinifera (Grape).